An 870-amino-acid polypeptide reads, in one-letter code: Elastin (870 aa).

The first 27 residues, 1-27 (MAGLTAAVPQPGVLLILLLNLLHPAQP), serve as a signal peptide directing secretion. 4-hydroxyproline occurs at positions 39 and 75. The residue at position 87 (P87) is a Hydroxyproline. Position 105 is a 4-hydroxyproline (P105). K122 and K126 each carry allysine. Residues P207, P220, P223, and P244 each carry the 4-hydroxyproline modification. Residues K290 and K309 each carry the allysine modification. P338 bears the 4-hydroxyproline mark. Residues K360 and K363 each carry the allysine modification. P375 bears the Hydroxyproline mark. A 4-hydroxyproline mark is found at P402 and P408. A hydroxyproline mark is found at P413 and P418. Allysine is present on residues K434, K438, K441, K485, and K488. 2 positions are modified to 4-hydroxyproline: P518 and P539. Allysine is present on residues K554, K558, K615, K619, and K623. 4-hydroxyproline is present on residues P637, P646, P662, and P670. Allysine is present on residues K677 and K680. P715 is subject to 4-hydroxyproline. Allysine is present on residues K730, K734, K793, and K796. Residue P842 is modified to 4-hydroxyproline. Residues C860 and C865 are joined by a disulfide bond.

Belongs to the elastin family. As to quaternary structure, the polymeric elastin chains are cross-linked together into an extensible 3D network. Forms a ternary complex with BGN and MFAP2. Interacts with MFAP2 via divalent cations (calcium &gt; magnesium &gt; manganese) in a dose-dependent and saturating manner. Interacts with FBLN5 and FBN1. Forms a ternary complex with FBN1 and FBLN2 or FBLN5. Interacts with MFAP4 in a Ca (2+)-dependent manner; this interaction promotes ELN self-assembly. Interacts with EFEMP2 with moderate affinity. In terms of processing, elastin is formed through the cross-linking of its soluble precursor tropoelastin. Cross-linking is initiated through the action of lysyl oxidase on exposed lysines to form allysine. Subsequent spontaneous condensation reactions with other allysine or unmodified lysine residues result in various bi-, tri-, and tetrafunctional cross-links. The most abundant cross-links in mature elastin fibers are lysinonorleucine, allysine aldol, desmosine, and isodesmosine. Post-translationally, hydroxylation on proline residues within the sequence motif, GXPG, is most likely to be 4-hydroxy as this fits the requirement for 4-hydroxylation in vertebrates.

It is found in the secreted. Its subcellular location is the extracellular space. The protein localises to the extracellular matrix. Functionally, major structural protein of tissues such as aorta and nuchal ligament, which must expand rapidly and recover completely. Molecular determinant of the late arterial morphogenesis, stabilizing arterial structure by regulating proliferation and organization of vascular smooth muscle. This Rattus norvegicus (Rat) protein is Elastin (Eln).